A 213-amino-acid polypeptide reads, in one-letter code: Redox-sensing transcriptional repressor Rex (213 aa).

The segment at residues L18–F57 is a DNA-binding region (H-T-H motif). G92–G97 serves as a coordination point for NAD(+).

The protein belongs to the transcriptional regulatory Rex family. Homodimer.

It is found in the cytoplasm. Its function is as follows. Modulates transcription in response to changes in cellular NADH/NAD(+) redox state. Binds to the promoter of the aldehyde-alcohol dehydrogenase adhE gene. Functions as a redox-dependent repressor of adhE expression. The protein is Redox-sensing transcriptional repressor Rex of Streptococcus pneumoniae (strain ATCC BAA-255 / R6).